A 215-amino-acid chain; its full sequence is Pyridoxine/pyridoxamine 5'-phosphate oxidase (215 aa).

Residues 9-12 (RRDY) and Lys-69 contribute to the substrate site. Residues 64–69 (RILLLK), 79–80 (FT), Lys-86, and Gln-108 each bind FMN. Substrate-binding residues include Tyr-126, Arg-130, and Ser-134. Residues 143-144 (QS) and Trp-188 each bind FMN. 194-196 (RLH) provides a ligand contact to substrate. Residue Arg-198 coordinates FMN.

The protein belongs to the pyridoxamine 5'-phosphate oxidase family. Homodimer. Requires FMN as cofactor.

The catalysed reaction is pyridoxamine 5'-phosphate + O2 + H2O = pyridoxal 5'-phosphate + H2O2 + NH4(+). It carries out the reaction pyridoxine 5'-phosphate + O2 = pyridoxal 5'-phosphate + H2O2. It participates in cofactor metabolism; pyridoxal 5'-phosphate salvage; pyridoxal 5'-phosphate from pyridoxamine 5'-phosphate: step 1/1. It functions in the pathway cofactor metabolism; pyridoxal 5'-phosphate salvage; pyridoxal 5'-phosphate from pyridoxine 5'-phosphate: step 1/1. Its function is as follows. Catalyzes the oxidation of either pyridoxine 5'-phosphate (PNP) or pyridoxamine 5'-phosphate (PMP) into pyridoxal 5'-phosphate (PLP). The polypeptide is Pyridoxine/pyridoxamine 5'-phosphate oxidase (Pseudomonas fluorescens (strain SBW25)).